Consider the following 422-residue polypeptide: Validoxylamine A glucosyltransferase (422 aa).

Belongs to the glycosyltransferase 2 family. Mn(2+) serves as cofactor.

It catalyses the reaction validoxylamine A + UDP-alpha-D-glucose = validamycin A + UDP + H(+). Involved in the biosynthesis of the antifungal agent validamycin A. Catalyzes the final attachment of glucose from UDP-alpha-D-glucose to validoxylamine A to yield validamycin A. UDP-glucose is the most efficient glycosyl donor, whereas GDP-glucose and ADP-glucose are much less efficient. ValG also utilizes UDP-galactose as substrate to produce the new validamycin analog, 4''-epi-validamycin A. The sequence is that of Validoxylamine A glucosyltransferase from Streptomyces hygroscopicus subsp. jinggangensis (strain 5008).